A 456-amino-acid polypeptide reads, in one-letter code: Kynurenine 3-monooxygenase (456 aa).

It belongs to the aromatic-ring hydroxylase family. KMO subfamily. FAD is required as a cofactor.

The catalysed reaction is L-kynurenine + NADPH + O2 + H(+) = 3-hydroxy-L-kynurenine + NADP(+) + H2O. It functions in the pathway cofactor biosynthesis; NAD(+) biosynthesis; quinolinate from L-kynurenine: step 1/3. Catalyzes the hydroxylation of L-kynurenine (L-Kyn) to form 3-hydroxy-L-kynurenine (L-3OHKyn). Required for synthesis of quinolinic acid. The protein is Kynurenine 3-monooxygenase of Xanthomonas campestris pv. campestris (strain 8004).